A 146-amino-acid chain; its full sequence is Small ribosomal subunit protein uS5 (146 aa).

Positions 8–71 constitute an S5 DRBM domain; that stretch reads FKEVVVNIGR…DDAFKNIIKV (64 aa).

This sequence belongs to the universal ribosomal protein uS5 family. Part of the 30S ribosomal subunit. Contacts proteins S4 and S8.

Its function is as follows. With S4 and S12 plays an important role in translational accuracy. Located at the back of the 30S subunit body where it stabilizes the conformation of the head with respect to the body. The sequence is that of Small ribosomal subunit protein uS5 from Wolinella succinogenes (strain ATCC 29543 / DSM 1740 / CCUG 13145 / JCM 31913 / LMG 7466 / NCTC 11488 / FDC 602W) (Vibrio succinogenes).